A 471-amino-acid chain; its full sequence is Ribulose bisphosphate carboxylase large chain (471 aa).

Lys-5 bears the N6,N6,N6-trimethyllysine mark. Positions 114 and 164 each coordinate substrate. Lys-166 functions as the Proton acceptor in the catalytic mechanism. Lys-168 serves as a coordination point for substrate. Residues Lys-192, Asp-194, and Glu-195 each contribute to the Mg(2+) site. N6-carboxylysine is present on Lys-192. Residue His-285 is the Proton acceptor of the active site. Substrate is bound by residues Arg-286, His-318, and Ser-370.

Belongs to the RuBisCO large chain family. Type I subfamily. Heterohexadecamer of 8 large chains and 8 small chains; disulfide-linked. The disulfide link is formed within the large subunit homodimers. Mg(2+) is required as a cofactor. In terms of processing, the disulfide bond which can form in the large chain dimeric partners within the hexadecamer appears to be associated with oxidative stress and protein turnover.

The protein resides in the plastid. It is found in the chloroplast. It catalyses the reaction 2 (2R)-3-phosphoglycerate + 2 H(+) = D-ribulose 1,5-bisphosphate + CO2 + H2O. The catalysed reaction is D-ribulose 1,5-bisphosphate + O2 = 2-phosphoglycolate + (2R)-3-phosphoglycerate + 2 H(+). RuBisCO catalyzes two reactions: the carboxylation of D-ribulose 1,5-bisphosphate, the primary event in carbon dioxide fixation, as well as the oxidative fragmentation of the pentose substrate in the photorespiration process. Both reactions occur simultaneously and in competition at the same active site. This chain is Ribulose bisphosphate carboxylase large chain, found in Deppea grandiflora.